The following is a 230-amino-acid chain: Dephospho-CoA kinase (230 aa).

The tract at residues 1–21 (MSKYAAAPSPYSHQPQTPEHK) is disordered. The DPCK domain occupies 26–225 (VVGLTGGIGS…QDYLKLAQQL (200 aa)). Position 34-39 (34-39 (GSGKSA)) interacts with ATP.

This sequence belongs to the CoaE family.

It is found in the cytoplasm. It catalyses the reaction 3'-dephospho-CoA + ATP = ADP + CoA + H(+). It functions in the pathway cofactor biosynthesis; coenzyme A biosynthesis; CoA from (R)-pantothenate: step 5/5. In terms of biological role, catalyzes the phosphorylation of the 3'-hydroxyl group of dephosphocoenzyme A to form coenzyme A. This is Dephospho-CoA kinase from Psychrobacter cryohalolentis (strain ATCC BAA-1226 / DSM 17306 / VKM B-2378 / K5).